The following is a 245-amino-acid chain: Cypemycin N-terminal methyltransferase (245 aa).

It belongs to the methyltransferase superfamily.

The enzyme catalyses N-terminal L-alanyl-[cypemycin] + 2 S-adenosyl-L-methionine = N-terminal N,N-dimethyl-L-alanyl-[cypemycin] + 2 S-adenosyl-L-homocysteine + 3 H(+). In terms of biological role, involved in the biosynthesis of the lanaridin cypemycin. The enzyme can methylate a variety of oligopeptides, cyclic peptides and the epsilon-amino group of lysine. The chain is Cypemycin N-terminal methyltransferase from Streptomyces sp.